A 412-amino-acid chain; its full sequence is uncharacterized protein (412 aa).

H49 contacts Zn(2+). E52 functions as the Proton acceptor in the catalytic mechanism. Zn(2+)-binding residues include H53 and E129.

The protein belongs to the peptidase M16 family. Zn(2+) serves as cofactor.

This is an uncharacterized protein from Rickettsia felis (strain ATCC VR-1525 / URRWXCal2) (Rickettsia azadi).